Reading from the N-terminus, the 322-residue chain is NADH oxidoreductase HCR (322 aa).

One can recognise an FAD-binding FR-type domain in the interval 7 to 107 (QCPWRMQVHH…SDAMGEFTCD (101 aa)). The interval 111–213 (EDKFLLLAAG…APYMDWVEQE (103 aa)) is oxidoreductase. The 2Fe-2S ferredoxin-type domain maps to 237-322 (SGLKFTKLQP…CHPQGDLVLA (86 aa)). [2Fe-2S] cluster is bound by residues C273, C278, C281, and C311.

The protein in the N-terminal section; belongs to the FAD-binding oxidoreductase type 6 family. The cofactor is [2Fe-2S] cluster. FAD serves as cofactor.

In terms of biological role, NADH oxidoreductase acting in concert with HCP. The chain is NADH oxidoreductase HCR (hcr) from Escherichia coli (strain K12).